A 505-amino-acid polypeptide reads, in one-letter code: Holliday junction branch migration ATPase PINA (505 aa).

The 105-residue stretch at 2–106 folds into the PINc domain; sequence NDLMLDKSAL…IVTADETQKK (105 aa). The interval 434-505 is KH domain; the sequence is PVNRGITMSN…NIKIKIKLSD (72 aa). The segment at 493-505 is required for maximum interaction with Hjc and Hjm; the sequence is KKNNIKIKIKLSD.

In terms of assembly, homohexamer; the central pore (25-31 Angstroms) is large enough to hold dsDNA. In PDB:5F4H two of the 6 subunits are in an ATP-binding competent conformation. Interacts with Holliday junction resolvase Hjc; in the presence of HJ DNA this interaction decreases branch migration but not Y-DNA unwinding. Interacts with helicase Hjm (hel308) which decreases the DNA helicase activity of Hjm. It depends on Ca(2+) as a cofactor.

The enzyme catalyses ATP + H2O = ADP + phosphate + H(+). Its function is as follows. Promotes Holliday junction (HJ) branch migration and unwinds Y-shaped DNA (but not replication forks or dsDNA) in an ATP hydrolysis-dependent manner. Stimulates cleavage by HJ resolvase Hjc. Unwinds Y-shaped and 3'-flap DNA substrates. In the absence of other proteins stabilizes replication forks (prevents spontaneous unwinding); Hjc, Hjm (Hel308) and PINA coordinate HJ migration and cleavage of replication forks in a coordinated way. Inhibits the 5'-3' (but not 3'-5') helicase activity of helicase Hjm (Hel308) on overhang DNA. Probably acts as an ATP-dependent pump that pulls DNA through the hexamer. This is Holliday junction branch migration ATPase PINA from Saccharolobus islandicus (strain REY15A) (Sulfolobus islandicus).